The chain runs to 426 residues: 3-phosphoshikimate 1-carboxyvinyltransferase (426 aa).

Residues Lys-22, Ser-23, and Arg-27 each coordinate 3-phosphoshikimate. A phosphoenolpyruvate-binding site is contributed by Lys-22. The phosphoenolpyruvate site is built by Gly-96 and Arg-124. 7 residues coordinate 3-phosphoshikimate: Ser-170, Ser-171, Gln-172, Ser-198, Asp-314, Asn-337, and Lys-341. Residue Gln-172 coordinates phosphoenolpyruvate. Catalysis depends on Asp-314, which acts as the Proton acceptor. Positions 345, 387, and 412 each coordinate phosphoenolpyruvate.

Belongs to the EPSP synthase family. In terms of assembly, monomer.

The protein resides in the cytoplasm. It catalyses the reaction 3-phosphoshikimate + phosphoenolpyruvate = 5-O-(1-carboxyvinyl)-3-phosphoshikimate + phosphate. The protein operates within metabolic intermediate biosynthesis; chorismate biosynthesis; chorismate from D-erythrose 4-phosphate and phosphoenolpyruvate: step 6/7. Catalyzes the transfer of the enolpyruvyl moiety of phosphoenolpyruvate (PEP) to the 5-hydroxyl of shikimate-3-phosphate (S3P) to produce enolpyruvyl shikimate-3-phosphate and inorganic phosphate. This Vibrio cholerae serotype O1 (strain ATCC 39541 / Classical Ogawa 395 / O395) protein is 3-phosphoshikimate 1-carboxyvinyltransferase.